The following is a 696-amino-acid chain: Glycine--tRNA ligase beta subunit (696 aa).

This sequence belongs to the class-II aminoacyl-tRNA synthetase family. In terms of assembly, tetramer of two alpha and two beta subunits.

Its subcellular location is the cytoplasm. The catalysed reaction is tRNA(Gly) + glycine + ATP = glycyl-tRNA(Gly) + AMP + diphosphate. This chain is Glycine--tRNA ligase beta subunit, found in Nitratidesulfovibrio vulgaris (strain DP4) (Desulfovibrio vulgaris).